We begin with the raw amino-acid sequence, 368 residues long: Xaa-Pro dipeptidase (368 aa).

5 residues coordinate Mn(2+): aspartate 223, aspartate 234, histidine 298, glutamate 327, and glutamate 341.

This sequence belongs to the peptidase M24B family. It depends on Mn(2+) as a cofactor.

It localises to the cytoplasm. The catalysed reaction is Xaa-L-Pro dipeptide + H2O = an L-alpha-amino acid + L-proline. The protein is Xaa-Pro dipeptidase (pepQ) of Lactobacillus delbrueckii subsp. lactis.